The sequence spans 450 residues: Phosphoglucosamine mutase (450 aa).

The active-site Phosphoserine intermediate is the S101. 4 residues coordinate Mg(2+): S101, D241, D243, and D245. Phosphoserine is present on S101.

Belongs to the phosphohexose mutase family. The cofactor is Mg(2+). Post-translationally, activated by phosphorylation.

The catalysed reaction is alpha-D-glucosamine 1-phosphate = D-glucosamine 6-phosphate. Catalyzes the conversion of glucosamine-6-phosphate to glucosamine-1-phosphate. This is Phosphoglucosamine mutase from Listeria monocytogenes serovar 1/2a (strain ATCC BAA-679 / EGD-e).